The sequence spans 572 residues: Proline--tRNA ligase (572 aa).

The protein belongs to the class-II aminoacyl-tRNA synthetase family. ProS type 1 subfamily. Homodimer.

It localises to the cytoplasm. It carries out the reaction tRNA(Pro) + L-proline + ATP = L-prolyl-tRNA(Pro) + AMP + diphosphate. In terms of biological role, catalyzes the attachment of proline to tRNA(Pro) in a two-step reaction: proline is first activated by ATP to form Pro-AMP and then transferred to the acceptor end of tRNA(Pro). As ProRS can inadvertently accommodate and process non-cognate amino acids such as alanine and cysteine, to avoid such errors it has two additional distinct editing activities against alanine. One activity is designated as 'pretransfer' editing and involves the tRNA(Pro)-independent hydrolysis of activated Ala-AMP. The other activity is designated 'posttransfer' editing and involves deacylation of mischarged Ala-tRNA(Pro). The misacylated Cys-tRNA(Pro) is not edited by ProRS. In Yersinia pseudotuberculosis serotype O:1b (strain IP 31758), this protein is Proline--tRNA ligase.